The chain runs to 349 residues: Green-sensitive opsin-1 (349 aa).

Over 1-36 (MNGTEGSNFYIPMSNRTGLVRSPYDYTQYYLAEPWK) the chain is Extracellular. N-linked (GlcNAc...) asparagine glycosylation is found at N2 and N15. A helical transmembrane segment spans residues 37–61 (FKALAFYMFLLIIFGFPINVLTLVV). At 62 to 73 (TAQHKKLRQPLN) the chain is on the cytoplasmic side. Residues 74–99 (YILVNLAFAGTIMVIFGFTVSFYCSL) form a helical membrane-spanning segment. The Extracellular segment spans residues 100–113 (VGYMALGPLGCVME). A disulfide bond links C110 and C187. The chain crosses the membrane as a helical span at residues 114 to 133 (GFFATLGGQVALWSLVVLAI). Over 134 to 152 (ERYIVVCKPMGSFKFSANH) the chain is Cytoplasmic. The chain crosses the membrane as a helical span at residues 153 to 176 (AMAGIAFTWFMACSCAVPPLFGWS). Residues 177–202 (RYLPEGMQTSCGPDYYTLNPEYNNES) are Extracellular-facing. N200 carries N-linked (GlcNAc...) asparagine glycosylation. A helical transmembrane segment spans residues 203–230 (YVMYMFSCHFCIPVTTIFFTYGSLVCTV). Over 231 to 252 (KAAAAQQQESESTQKAEREVTR) the chain is Cytoplasmic. Residues 253–276 (MVILMVLGFLFAWVPYASFAAWIF) form a helical membrane-spanning segment. Over 277-284 (FNRGAAFS) the chain is Extracellular. A helical membrane pass occupies residues 285–309 (AQAMAVPAFFSKTSAVFNPIIYVLL). K296 carries the N6-(retinylidene)lysine modification. Residues 310–349 (NKQFRSCMLNTLFCGKSPLGDDESSSVSTSKTEVSSVSPA) lie on the Cytoplasmic side of the membrane. Residues 328-349 (LGDDESSSVSTSKTEVSSVSPA) are disordered. Residues 334–349 (SSVSTSKTEVSSVSPA) show a composition bias toward low complexity.

The protein belongs to the G-protein coupled receptor 1 family. Opsin subfamily. Phosphorylated on some or all of the serine and threonine residues present in the C-terminal region. In terms of tissue distribution, retinal double cone accessory photoreceptor cell outer segments.

It is found in the membrane. Functionally, visual pigments are the light-absorbing molecules that mediate vision. They consist of an apoprotein, opsin, covalently linked to cis-retinal. This Danio rerio (Zebrafish) protein is Green-sensitive opsin-1 (opn1mw1).